Here is a 285-residue protein sequence, read N- to C-terminus: Transcription factor MYB15 (285 aa).

2 consecutive HTH myb-type domains span residues 9–61 and 62–116; these read KMGL…MNYL and KPDI…KKRL. 2 DNA-binding regions (H-T-H motif) span residues 37–61 and 89–112; these read WRAL…MNYL and WSAI…HTHL. The segment at 115–172 is disordered; it reads RLEDYQPAKPKTSNKKKGTKPKSESVITSSNSTRSESELADSSNPSGESLFSTSPSTS. Over residues 139–158 the composition is skewed to polar residues; it reads SVITSSNSTRSESELADSSN. Residues 159–172 show a composition bias toward low complexity; that stretch reads PSGESLFSTSPSTS.

As to quaternary structure, interacts with SCRM/ICE1. As to expression, expressed in roots, leaves, stems and flowers. Expressed in stomatal guard cells.

Its subcellular location is the nucleus. Its function is as follows. Transcription factor involved in cold-regulation of CBF genes and in the development of freezing tolerance. May be part of a complex network of transcription factors controlling the expression of CBF genes and other genes in response to cold stress. Binds to the MYB recognition sequences in the promoters of CBF1, CBF2 and CBF3 genes. Involved in drought and salt tolerance. May enhance expression levels of genes involved in abscisic acid (ABA) biosynthesis and signaling, as well as those encoding stress-protective proteins. The polypeptide is Transcription factor MYB15 (Arabidopsis thaliana (Mouse-ear cress)).